Here is a 713-residue protein sequence, read N- to C-terminus: Signal transducer and activator of transcription 1 (713 aa).

The SH2 domain occupies 477–574; sequence WCIGFISKHD…EEMLRYFESE (98 aa).

The protein belongs to the transcription factor STAT family. Forms a homodimer or a heterodimer with a related family member.

Its subcellular location is the cytoplasm. The protein resides in the nucleus. Carries out a dual function: signal transduction and activation of transcription. Activated STAT proteins play a role in repression of dauer formation. Neuronal expression is held in check by negative signals through the TGF-beta pathway that target the daf-3 transcription factor. The sequence is that of Signal transducer and activator of transcription 1 from Caenorhabditis briggsae.